Consider the following 73-residue polypeptide: Large ribosomal subunit protein bL31 (73 aa).

Belongs to the bacterial ribosomal protein bL31 family. Type A subfamily. Part of the 50S ribosomal subunit.

Binds the 23S rRNA. The polypeptide is Large ribosomal subunit protein bL31 (Bartonella henselae (strain ATCC 49882 / DSM 28221 / CCUG 30454 / Houston 1) (Rochalimaea henselae)).